The primary structure comprises 202 residues: MHNASDIQSALVPMVIEQTAKGERSFDIYSRLLKERIIFLVGQVEEHMANLIVAQLLFLESESPDKDIFLYINSPGGSVTAGMAIYDTMQFIKPNVSTVCIGQAASMGAFLLAGGEKGKRFCLPNSRVMIHQPLGGFQGQASDIAIHAQEILGIKNKLNQMLADHTGQPLEVIERDTDRDNFMSATQAVEYGLVDAVMTKRG.

Ser106 acts as the Nucleophile in catalysis. His131 is a catalytic residue.

The protein belongs to the peptidase S14 family. In terms of assembly, fourteen ClpP subunits assemble into 2 heptameric rings which stack back to back to give a disk-like structure with a central cavity, resembling the structure of eukaryotic proteasomes.

The protein localises to the cytoplasm. The catalysed reaction is Hydrolysis of proteins to small peptides in the presence of ATP and magnesium. alpha-casein is the usual test substrate. In the absence of ATP, only oligopeptides shorter than five residues are hydrolyzed (such as succinyl-Leu-Tyr-|-NHMec, and Leu-Tyr-Leu-|-Tyr-Trp, in which cleavage of the -Tyr-|-Leu- and -Tyr-|-Trp bonds also occurs).. Its function is as follows. Cleaves peptides in various proteins in a process that requires ATP hydrolysis. Has a chymotrypsin-like activity. Plays a major role in the degradation of misfolded proteins. This Shewanella oneidensis (strain ATCC 700550 / JCM 31522 / CIP 106686 / LMG 19005 / NCIMB 14063 / MR-1) protein is ATP-dependent Clp protease proteolytic subunit.